The primary structure comprises 130 residues: Cytochrome c oxidase subunit 13, mitochondrial (130 aa).

The transit peptide at 1 to 31 directs the protein to the mitochondrion; sequence MSMMNRNIGFLSRTLKTSVPKRAGLLSFRAY. Residues 32–61 lie on the Mitochondrial matrix side of the membrane; the sequence is SNEAKVNWLEEVQAEEEHAKRSSEFWKKVT. The chain crosses the membrane as a helical span at residues 62-80; that stretch reads YYIGGPALILASANAYYIY. The Mitochondrial intermembrane segment spans residues 81–130; it reads CKHQEHAKHVEDTDPGYSFENLRFKKYPWGDGSKTLFWNDKVNHLKKDDE.

The protein belongs to the cytochrome c oxidase subunit 6A family. In terms of assembly, component of the cytochrome c oxidase (complex IV, CIV), a multisubunit enzyme composed of a catalytic core of 3 subunits and several supernumerary subunits. The complex exists as a monomer or a dimer and forms supercomplexes (SCs) in the inner mitochondrial membrane with ubiquinol-cytochrome c oxidoreductase (cytochrome b-c1 complex, complex III, CIII).

The protein resides in the mitochondrion inner membrane. The protein operates within energy metabolism; oxidative phosphorylation. Functionally, component of the cytochrome c oxidase, the last enzyme in the mitochondrial electron transport chain which drives oxidative phosphorylation. The respiratory chain contains 3 multisubunit complexes succinate dehydrogenase (complex II, CII), ubiquinol-cytochrome c oxidoreductase (cytochrome b-c1 complex, complex III, CIII) and cytochrome c oxidase (complex IV, CIV), that cooperate to transfer electrons derived from NADH and succinate to molecular oxygen, creating an electrochemical gradient over the inner membrane that drives transmembrane transport and the ATP synthase. Cytochrome c oxidase is the component of the respiratory chain that catalyzes the reduction of oxygen to water. Electrons originating from reduced cytochrome c in the intermembrane space (IMS) are transferred via the dinuclear copper A center (CU(A)) of subunit 2 and heme A of subunit 1 to the active site in subunit 1, a binuclear center (BNC) formed by heme A3 and copper B (CU(B)). The BNC reduces molecular oxygen to 2 water molecules unsing 4 electrons from cytochrome c in the IMS and 4 protons from the mitochondrial matrix. This Schizosaccharomyces pombe (strain 972 / ATCC 24843) (Fission yeast) protein is Cytochrome c oxidase subunit 13, mitochondrial (cox13).